Consider the following 309-residue polypeptide: Ribosomal RNA small subunit methyltransferase H (309 aa).

S-adenosyl-L-methionine contacts are provided by residues 33-35 (GGH), Asp-53, Phe-79, Asp-100, and Gln-107.

This sequence belongs to the methyltransferase superfamily. RsmH family.

The protein localises to the cytoplasm. The catalysed reaction is cytidine(1402) in 16S rRNA + S-adenosyl-L-methionine = N(4)-methylcytidine(1402) in 16S rRNA + S-adenosyl-L-homocysteine + H(+). Functionally, specifically methylates the N4 position of cytidine in position 1402 (C1402) of 16S rRNA. The protein is Ribosomal RNA small subunit methyltransferase H of Clostridium botulinum (strain Kyoto / Type A2).